The chain runs to 308 residues: 4-hydroxy-3-methylbut-2-enyl diphosphate reductase (308 aa).

Cys-12 is a binding site for [4Fe-4S] cluster. His-43 and His-77 together coordinate (2E)-4-hydroxy-3-methylbut-2-enyl diphosphate. 2 residues coordinate dimethylallyl diphosphate: His-43 and His-77. Isopentenyl diphosphate contacts are provided by His-43 and His-77. Cys-99 is a binding site for [4Fe-4S] cluster. A (2E)-4-hydroxy-3-methylbut-2-enyl diphosphate-binding site is contributed by His-127. His-127 lines the dimethylallyl diphosphate pocket. His-127 lines the isopentenyl diphosphate pocket. Catalysis depends on Glu-129, which acts as the Proton donor. A (2E)-4-hydroxy-3-methylbut-2-enyl diphosphate-binding site is contributed by Thr-167. Residue Cys-197 participates in [4Fe-4S] cluster binding. 4 residues coordinate (2E)-4-hydroxy-3-methylbut-2-enyl diphosphate: Ser-225, Ser-226, Asn-227, and Ser-269. Dimethylallyl diphosphate-binding residues include Ser-225, Ser-226, Asn-227, and Ser-269. 4 residues coordinate isopentenyl diphosphate: Ser-225, Ser-226, Asn-227, and Ser-269.

Belongs to the IspH family. Requires [4Fe-4S] cluster as cofactor.

The enzyme catalyses isopentenyl diphosphate + 2 oxidized [2Fe-2S]-[ferredoxin] + H2O = (2E)-4-hydroxy-3-methylbut-2-enyl diphosphate + 2 reduced [2Fe-2S]-[ferredoxin] + 2 H(+). The catalysed reaction is dimethylallyl diphosphate + 2 oxidized [2Fe-2S]-[ferredoxin] + H2O = (2E)-4-hydroxy-3-methylbut-2-enyl diphosphate + 2 reduced [2Fe-2S]-[ferredoxin] + 2 H(+). It participates in isoprenoid biosynthesis; dimethylallyl diphosphate biosynthesis; dimethylallyl diphosphate from (2E)-4-hydroxy-3-methylbutenyl diphosphate: step 1/1. Its pathway is isoprenoid biosynthesis; isopentenyl diphosphate biosynthesis via DXP pathway; isopentenyl diphosphate from 1-deoxy-D-xylulose 5-phosphate: step 6/6. Functionally, catalyzes the conversion of 1-hydroxy-2-methyl-2-(E)-butenyl 4-diphosphate (HMBPP) into a mixture of isopentenyl diphosphate (IPP) and dimethylallyl diphosphate (DMAPP). Acts in the terminal step of the DOXP/MEP pathway for isoprenoid precursor biosynthesis. The sequence is that of 4-hydroxy-3-methylbut-2-enyl diphosphate reductase from Wolbachia pipientis subsp. Culex pipiens (strain wPip).